The primary structure comprises 2448 residues: Non-reducing polyketide synthase mapC (2448 aa).

Residues 14–226 are N-terminal acylcarrier protein transacylase domain (SAT); it reads VLFGPQCPDI…HHEAHREGIQ (213 aa). The segment at 330–350 is disordered; sequence GFSNESPQPSTASLSNSVQTF. In terms of domain architecture, Ketosynthase family 3 (KS3) spans 359-775; it reads ASPIAITGMA…GSNAALIVKE (417 aa). Active-site for beta-ketoacyl synthase activity residues include Cys-524, His-659, and His-698. The segment at 885–1188 is malonyl-CoA:ACP transacylase (MAT) domain; the sequence is LCFGGQNGLT…HKIDLGGSSG (304 aa). The active-site For acyl/malonyl transferase activity is Ser-972. An N-terminal hotdog fold region spans residues 1256–1388; sequence GQEAGLLCQL…GTVCLHQERS (133 aa). A PKS/mFAS DH domain is found at 1256–1565; the sequence is GQEAGLLCQL…FTSVSIRSLT (310 aa). A product template (PT) domain region spans residues 1261–1564; the sequence is LLCQLSESPD…RFTSVSIRSL (304 aa). His-1290 acts as the Proton acceptor; for dehydratase activity in catalysis. Residues 1414-1565 form a C-terminal hotdog fold region; that stretch reads ASNGLKGSTV…FTSVSIRSLT (152 aa). Asp-1471 (proton donor; for dehydratase activity) is an active-site residue. A Carrier domain is found at 1610 to 1684; sequence AKDLATVQEM…GLVEHIFPGH (75 aa). Ser-1644 is modified (O-(pantetheine 4'-phosphoryl)serine). The segment at 1841 to 2076 is methyltransferase (CMeT) domain; it reads PYALEHDLLQ…GFEWVDWTNN (236 aa). Catalysis depends on for thioesterase activity residues Ser-2227, Asp-2385, and His-2417.

It is found in the cytoplasm. The protein resides in the cytosol. It carries out the reaction 3 malonyl-CoA + acetyl-CoA + S-adenosyl-L-methionine + H(+) = 5-methylorsellinate + S-adenosyl-L-homocysteine + 3 CO2 + 4 CoA. The protein operates within secondary metabolite biosynthesis; terpenoid biosynthesis. Non-reducing polyketide synthase; part of the gene cluster that mediates the biosynthesis of mycophenolic acid (MPA), the first isolated antibiotic natural product in the world obtained from a culture of Penicillium brevicompactum in 1893. MpaC catalyzes the synthesis of 5-methylorsellinic acid (5MOA) via the condensation of 1 acetyl-CoA starter unit with 3 malonyl-CoA units and one methylation step. The first step of the pathway is the synthesis of 5-methylorsellinic acid (5MOA) by the cytosolic polyketide synthase mpaC. 5MOA is then converted to the phthalide compound 5,7-dihydroxy-4,6-dimethylphthalide (DHMP) by the endoplasmic reticulum-bound cytochrome P450 monooxygenase mpaDE. MpaDE first catalyzes hydroxylation of 5-MOA to 4,6-dihydroxy-2-(hydroxymethyl)-3-methylbenzoic acid (DHMB). MpaDE then acts as a lactone synthase that catalyzes the ring closure to convert DHMB into DHMP. The next step is the prenylation of DHMP by the Golgi apparatus-associated prenyltransferase mpaA to yield farnesyl-DHMP (FDHMP). The ER-bound oxygenase mpaB then mediates the oxidative cleavage the C19-C20 double bond in FDHMP to yield FDHMP-3C via a mycophenolic aldehyde intermediate. The O-methyltransferase mpaG catalyzes the methylation of FDHMP-3C to yield MFDHMP-3C. After the cytosolic methylation of FDHMP-3C, MFDHMP-3C enters into peroxisomes probably via free diffusion due to its low molecular weight. Upon a peroxisomal CoA ligation reaction, catalyzed by a beta-oxidation component enzyme acyl-CoA ligase ACL891, MFDHMP-3C-CoA would then be restricted to peroxisomes for the following beta-oxidation pathway steps. The peroxisomal beta-oxidation machinery than converts MFDHMP-3C-CoA into MPA_CoA, via a beta-oxidation chain-shortening process. Finally mpaH acts as a peroxisomal acyl-CoA hydrolase with high substrate specificity toward MPA-CoA to release the final product MPA. The sequence is that of Non-reducing polyketide synthase mapC from Penicillium brevicompactum.